Consider the following 504-residue polypeptide: Plasma protease C1 inhibitor (504 aa).

The first 22 residues, 1-22 (MASRLTPLTLLLLLLAGDRAFS), serve as a signal peptide directing secretion. A disordered region spans residues 22–67 (SDPEATSHSTQDPLEAQAKSRESFPERDDSWSPPEPTVLPSTWPTT). Basic and acidic residues predominate over residues 39–51 (AKSRESFPERDDS). N-linked (GlcNAc...) asparagine glycosylation is found at asparagine 75, asparagine 83, and asparagine 107. Positions 85–124 (SFSQHSQPAAQLPTDSPGQPPLNSSSQPSTASDLPTQATT) are enriched in polar residues. The segment at 85 to 141 (SFSQHSQPAAQLPTDSPGQPPLNSSSQPSTASDLPTQATTEPFCPEPLAQCSDSDRD) is disordered. 2 disulfide bridges follow: cysteine 128-cysteine 432 and cysteine 135-cysteine 210. N-linked (GlcNAc...) asparagine glycosylation is found at asparagine 243 and asparagine 356.

The protein belongs to the serpin family. As to quaternary structure, interacts with MASP1.

It is found in the secreted. Its function is as follows. Serine protease inhibitor, which acrs as a regulator of the classical complement pathway. Forms a proteolytically inactive stoichiometric complex with the C1r or C1s proteases. May also regulate blood coagulation, fibrinolysis and the generation of kinins. Very efficient inhibitor of FXIIa. Inhibits chymotrypsin and kallikrein. This is Plasma protease C1 inhibitor (Serping1) from Mus musculus (Mouse).